Consider the following 181-residue polypeptide: Regulator of G-protein signaling 5 (181 aa).

An RGS domain is found at 64-180 (SLDKLLQNSY…VRSEFYKELI (117 aa)).

Expressed in heart and muscle.

The protein localises to the cytoplasm. It localises to the membrane. Its function is as follows. Inhibits signal transduction by increasing the GTPase activity of G protein alpha subunits thereby driving them into their inactive GDP-bound form. Binds to G(i)-alpha and G(o)-alpha, but not to G(s)-alpha. This Mus musculus (Mouse) protein is Regulator of G-protein signaling 5 (Rgs5).